Here is a 154-residue protein sequence, read N- to C-terminus: 2S sulfur-rich seed storage protein 2 (154 aa).

A signal peptide spans 1–22 (MAKMSVVAAALLALLVLGQATA). Positions 29–52 (TTLEEEQEENPRGRSEQQCREQME) are disordered. Residues 37-52 (ENPRGRSEQQCREQME) show a composition bias toward basic and acidic residues. Intrachain disulfides connect C47/C101, C60/C90, C91/C138, and C103/C145. Residues 72 to 76 (PYQNP) constitute a propeptide that is removed on maturation. A propeptide spanning residues 151–154 (TAWL) is cleaved from the precursor.

The protein belongs to the 2S seed storage albumins family. In terms of assembly, the mature protein consists of a small and a large chain linked by disulfide bonds.

Its function is as follows. This is a 2S seed storage protein. In Bertholletia excelsa (Brazil nut), this protein is 2S sulfur-rich seed storage protein 2 (BE2S2).